Reading from the N-terminus, the 46-residue chain is Large ribosomal subunit protein bL34 (46 aa).

The segment covering 1–17 (MTKRTLRGSVRKKKRTS) has biased composition (basic residues). Residues 1-26 (MTKRTLRGSVRKKKRTSGFRARMETP) are disordered.

It belongs to the bacterial ribosomal protein bL34 family.

The sequence is that of Large ribosomal subunit protein bL34 (rpmH) from Pseudanabaena sp. (strain PCC 6903).